Reading from the N-terminus, the 1172-residue chain is MALFPAFADVSEASGDGAFRKELDWLSNPSFRVGNLTSLSRQTEEVTALASEGSPPPRYSFIRSPLKSELSGESNTSEKLAQTSRKKKKEKKKRRKHQHHRKTKRRHEQLSSSGSESDTEAGKDRASRSIRDDQKEAEKPCQGSNAAAAVAAAAGHRSIWLEDIHDLTDVFRTDKKPDPANWEYKSLYRGDIARYKRKGDSCLGINPKKQCISWEGASAAKKHSHRHLERYFTKKNVGLMRTEGIAVCSNPEPASSEPVTFIPVKDSAEAATPVTSWLNPLGIYDQSTTQWLQGQGPAEQESKQPDSQQDRENAALKARVEEFNRRVRENPWDTQLWMAFVAFQDEVMRSPGIYALGEGEQEKHRKSLKLLLEKKLAVLERAIESNPGSVELKLAKLQLCSEFWEPSALAKEWQKLLFLHPNNTSLWQRYLSFCQSQFGTFSVSKLHSLYGKCLSTLSAVKDGSMLSHPVLPGTEEAMFGLFLQQCHFLRQAGHSEKVISLFQAMVDFTFFKPDSVKELPTKVQVEFFEPFWDSGEPRVGEKGARGWRAWMHQQERGGWVLITPDEDDEEPEEEDQEIKDKTLPRWQIWLAVERSRDQRHWRPWRPDKTKKQTEEDCEDPERQVLFDDIGQSLIRLSSPDLQFQLIQAFLQFLGVPSGFLPPASCLYLAMDESSIFESELYDEKPLTYFNPSFSGISCVGSMEQLGRPRWTKGHNREGEEFVRNVFHLVLPLLAGKQKSQLSLSWLRYEIAKVIWCLHTKKKRLKSQGKSCKKLAKNLLKEPENRNNFCLWKQYAHLEWLLGNTEDARKVFDTALSMAGSSELKDRELCELSLLYAELEMELSPDSRGATTGRAVHILTRLTESSPYGPYTGQVSSTQVLKARKAYELALQDCLGQSCASSPAPAEALDCLGSLVRCFMLFQYLTVGIDAAVQIYGRVFAKLKGSARLEDPGPEDSTSSQSLTNVLEAVSMMHTSLLRFHMNVCVYPLAPLRETLSDALKLYPGNQVLWRAYVQIQNKSHSANKTRRFFDTVTRSAKHLEPWLFAIEAEKLRKKLVESVQRVGGREVHATIPETGLTHRIRALFENAIRSDKGNQCPLLWRMYLNFLVSLGNKERSKGVFYKALQSCPWAKVLYMDAMEYFPDELQEILDVMTEKELRVRLPLEELELLLED.

Residue Ala-2 is modified to N-acetylalanine. Residues 46–144 (VTALASEGSP…KEAEKPCQGS (99 aa)) are disordered. Positions 71 to 83 (SGESNTSEKLAQT) are enriched in polar residues. A coiled-coil region spans residues 78 to 330 (EKLAQTSRKK…EEFNRRVREN (253 aa)). Residues 84-107 (SRKKKKEKKKRRKHQHHRKTKRRH) show a composition bias toward basic residues. Positions 120–139 (EAGKDRASRSIRDDQKEAEK) are enriched in basic and acidic residues. An MID/MTR4-interacting domain region spans residues 171 to 275 (FRTDKKPDPA…DSAEAATPVT (105 aa)). A disordered region spans residues 292–313 (LQGQGPAEQESKQPDSQQDREN). The segment covering 300-313 (QESKQPDSQQDREN) has biased composition (basic and acidic residues). HAT repeat units follow at residues 314–346 (AALK…FQDE), 404–436 (WEPS…FCQS), 766–800 (SQGK…LEWL), 986–1018 (YPLA…IQNK), and 1075–1109 (GLTH…FLVS).

The protein belongs to the NRDE2 family. In terms of assembly, interacts with MTREX; the interaction is direct and stabilizes NRDE2. Interacts with EXOSC10, EFTUD2 and EIF4A3.

The protein localises to the nucleus speckle. It is found in the nucleus. Its subcellular location is the nucleolus. The protein resides in the nucleoplasm. Protein of the nuclear speckles that regulates RNA degradation and export from the nucleus through its interaction with MTREX an essential factor directing various RNAs to exosomal degradation. Changes the conformation of MTREX, precluding its association with the nuclear exosome and interaction with proteins required for its function in RNA exosomal degradation. Negatively regulates, for instance, the degradation of mRNAs and lncRNAs by inhibiting their MTREX-mediated recruitment to nuclear exosome. By preventing the degradation of RNAs in the nucleus, it promotes their export to the cytoplasm. U5 snRNP-associated RNA splicing factor which is required for efficient splicing of CEP131 pre-mRNA and plays an important role in centrosome maturation, integrity and function during mitosis. Suppresses intron retention in a subset of pre-mRNAs containing short, GC-rich introns with relatively weak 5' and 3' splice sites. Plays a role in DNA damage response. This Mus musculus (Mouse) protein is Nuclear exosome regulator NRDE2 (Nrde2).